Reading from the N-terminus, the 180-residue chain is Large ribosomal subunit protein uL18m (180 aa).

The protein belongs to the universal ribosomal protein uL18 family. As to quaternary structure, component of the mitochondrial ribosome large subunit (39S) which comprises a 16S rRNA and about 50 distinct proteins.

It localises to the mitochondrion. Its function is as follows. Together with thiosulfate sulfurtransferase (TST), acts as a mitochondrial import factor for the cytosolic 5S rRNA. The precursor form shows RNA chaperone activity; is able to fold the 5S rRNA into an import-competent conformation that is recognized by rhodanese (TST). Both the cytoplasmic and mitochondrial forms are able to bind to the helix IV-loop D in the gamma domain of the 5S rRNA. This is Large ribosomal subunit protein uL18m (Mrpl18) from Mus musculus (Mouse).